The chain runs to 143 residues: Small ribosomal subunit protein uS12 (143 aa).

The segment covering 1 to 20 has biased composition (basic residues); the sequence is MGKCRGLRTARKLRSHRRDQ. Residues 1 to 26 form a disordered region; that stretch reads MGKCRGLRTARKLRSHRRDQKWHDKQ. A Glycyl lysine isopeptide (Lys-Gly) (interchain with G-Cter in SUMO2) cross-link involves residue K37. K54 is modified (N6-succinyllysine). A 3-hydroxyproline modification is found at P62. Residue K135 is modified to N6-acetyllysine.

Belongs to the universal ribosomal protein uS12 family. Component of the 40S small ribosomal subunit. Part of the small subunit (SSU) processome, composed of more than 70 proteins and the RNA chaperone small nucleolar RNA (snoRNA) U3. Post-translationally, hydroxylation at Pro-62 affects translation termination efficiency.

It is found in the cytoplasm. It localises to the cytosol. Its subcellular location is the rough endoplasmic reticulum. The protein localises to the nucleus. The protein resides in the nucleolus. Functionally, component of the ribosome, a large ribonucleoprotein complex responsible for the synthesis of proteins in the cell. The small ribosomal subunit (SSU) binds messenger RNAs (mRNAs) and translates the encoded message by selecting cognate aminoacyl-transfer RNA (tRNA) molecules. The large subunit (LSU) contains the ribosomal catalytic site termed the peptidyl transferase center (PTC), which catalyzes the formation of peptide bonds, thereby polymerizing the amino acids delivered by tRNAs into a polypeptide chain. The nascent polypeptides leave the ribosome through a tunnel in the LSU and interact with protein factors that function in enzymatic processing, targeting, and the membrane insertion of nascent chains at the exit of the ribosomal tunnel. Plays an important role in translational accuracy. Part of the small subunit (SSU) processome, first precursor of the small eukaryotic ribosomal subunit. During the assembly of the SSU processome in the nucleolus, many ribosome biogenesis factors, an RNA chaperone and ribosomal proteins associate with the nascent pre-rRNA and work in concert to generate RNA folding, modifications, rearrangements and cleavage as well as targeted degradation of pre-ribosomal RNA by the RNA exosome. The chain is Small ribosomal subunit protein uS12 (RPS23) from Bos taurus (Bovine).